The primary structure comprises 168 residues: Ribosome maturation factor RimP (168 aa).

It belongs to the RimP family.

It is found in the cytoplasm. Required for maturation of 30S ribosomal subunits. This Bordetella bronchiseptica (strain ATCC BAA-588 / NCTC 13252 / RB50) (Alcaligenes bronchisepticus) protein is Ribosome maturation factor RimP.